A 117-amino-acid polypeptide reads, in one-letter code: Protein P16 (117 aa).

A helical transmembrane segment spans residues 7–24; sequence LYWVGGGLVLILIWLWFR.

It is found in the virion membrane. Its function is as follows. Protein of the infection vertex complex, which increases the vertex stability. Anchors the vertex structure to the viral membrane. Essential for viral infectivity. This chain is Protein P16 (XVI), found in Enterobacteria phage PRD1 (Bacteriophage PRD1).